We begin with the raw amino-acid sequence, 319 residues long: Dehydrogenase/reductase SDR family member 9 (319 aa).

The first 17 residues, 1–17, serve as a signal peptide directing secretion; it reads MLFWVLGLLILCGFLWT. Residues 34 to 58 and Asp83 contribute to the NAD(+) site; that span reads ITGC…HVIA. Ser164 provides a ligand contact to substrate. The active-site Proton acceptor is Tyr176. Residue Lys180 participates in NAD(+) binding.

Belongs to the short-chain dehydrogenases/reductases (SDR) family. In terms of assembly, homotetramer. In terms of tissue distribution, highly expressed in trachea and epidermis. Detected at lower levels in spinal cord, bone marrow, brain, tongue, esophagus, heart, colon, testis, placenta, lung, skeletal muscle and lymph node.

Its subcellular location is the microsome membrane. It is found in the endoplasmic reticulum membrane. It carries out the reaction 3beta-hydroxy-5alpha-pregnane-20-one + NAD(+) = 5alpha-pregnane-3,20-dione + NADH + H(+). It catalyses the reaction 17beta-hydroxy-5alpha-androstan-3-one + NAD(+) = 5alpha-androstan-3,17-dione + NADH + H(+). The enzyme catalyses androsterone + NAD(+) = 5alpha-androstan-3,17-dione + NADH + H(+). The catalysed reaction is 5alpha-androstane-3alpha,17beta-diol + NAD(+) = 17beta-hydroxy-5alpha-androstan-3-one + NADH + H(+). It carries out the reaction all-trans-retinol + NAD(+) = all-trans-retinal + NADH + H(+). It catalyses the reaction 3alpha-hydroxy-5alpha-pregnan-20-one + NAD(+) = 5alpha-pregnane-3,20-dione + NADH + H(+). Its function is as follows. 3-alpha-hydroxysteroid dehydrogenase that converts 3-alpha-tetrahydroprogesterone (allopregnanolone) to dihydroxyprogesterone and 3-alpha-androstanediol to dihydroxyprogesterone. Also plays a role in the biosynthesis of retinoic acid from retinaldehyde. Can utilize both NADH and NADPH. In Homo sapiens (Human), this protein is Dehydrogenase/reductase SDR family member 9 (DHRS9).